Reading from the N-terminus, the 299-residue chain is Phosphoribosylaminoimidazole-succinocarboxamide synthase (299 aa).

The protein belongs to the SAICAR synthetase family.

It carries out the reaction 5-amino-1-(5-phospho-D-ribosyl)imidazole-4-carboxylate + L-aspartate + ATP = (2S)-2-[5-amino-1-(5-phospho-beta-D-ribosyl)imidazole-4-carboxamido]succinate + ADP + phosphate + 2 H(+). The protein operates within purine metabolism; IMP biosynthesis via de novo pathway; 5-amino-1-(5-phospho-D-ribosyl)imidazole-4-carboxamide from 5-amino-1-(5-phospho-D-ribosyl)imidazole-4-carboxylate: step 1/2. In Maridesulfovibrio salexigens (strain ATCC 14822 / DSM 2638 / NCIMB 8403 / VKM B-1763) (Desulfovibrio salexigens), this protein is Phosphoribosylaminoimidazole-succinocarboxamide synthase.